Here is a 65-residue protein sequence, read N- to C-terminus: Neuropeptide-like protein 28 (65 aa).

A signal peptide spans 1–22; that stretch reads MISTSSILILVFLLACFMATSA. A tyrosine amide mark is found at Tyr-29, Tyr-39, Tyr-47, and Tyr-55. Position 63 is a tryptophan amide (Trp-63).

The protein belongs to the YARP (YGGW-amide related peptide) family.

It is found in the secreted. In terms of biological role, may have antimicrobial activity. The protein is Neuropeptide-like protein 28 (nlp-28) of Caenorhabditis elegans.